The following is a 394-amino-acid chain: NAD(P)H-quinone oxidoreductase subunit H (394 aa).

Belongs to the complex I 49 kDa subunit family. NDH-1 can be composed of about 15 different subunits; different subcomplexes with different compositions have been identified which probably have different functions.

The protein localises to the cellular thylakoid membrane. It carries out the reaction a plastoquinone + NADH + (n+1) H(+)(in) = a plastoquinol + NAD(+) + n H(+)(out). It catalyses the reaction a plastoquinone + NADPH + (n+1) H(+)(in) = a plastoquinol + NADP(+) + n H(+)(out). Its function is as follows. NDH-1 shuttles electrons from an unknown electron donor, via FMN and iron-sulfur (Fe-S) centers, to quinones in the respiratory and/or the photosynthetic chain. The immediate electron acceptor for the enzyme in this species is believed to be plastoquinone. Couples the redox reaction to proton translocation, and thus conserves the redox energy in a proton gradient. Cyanobacterial NDH-1 also plays a role in inorganic carbon-concentration. This is NAD(P)H-quinone oxidoreductase subunit H from Synechococcus sp. (strain RCC307).